The chain runs to 473 residues: Protein nucleotidyltransferase YdiU (473 aa).

The ATP site is built by glycine 79, glycine 81, arginine 82, lysine 102, aspartate 114, glycine 115, arginine 165, and arginine 172. The active-site Proton acceptor is aspartate 241. Mg(2+)-binding residues include asparagine 242 and aspartate 251. Aspartate 251 serves as a coordination point for ATP.

This sequence belongs to the SELO family. Mg(2+) is required as a cofactor. The cofactor is Mn(2+).

The catalysed reaction is L-seryl-[protein] + ATP = 3-O-(5'-adenylyl)-L-seryl-[protein] + diphosphate. It carries out the reaction L-threonyl-[protein] + ATP = 3-O-(5'-adenylyl)-L-threonyl-[protein] + diphosphate. It catalyses the reaction L-tyrosyl-[protein] + ATP = O-(5'-adenylyl)-L-tyrosyl-[protein] + diphosphate. The enzyme catalyses L-histidyl-[protein] + UTP = N(tele)-(5'-uridylyl)-L-histidyl-[protein] + diphosphate. The catalysed reaction is L-seryl-[protein] + UTP = O-(5'-uridylyl)-L-seryl-[protein] + diphosphate. It carries out the reaction L-tyrosyl-[protein] + UTP = O-(5'-uridylyl)-L-tyrosyl-[protein] + diphosphate. In terms of biological role, nucleotidyltransferase involved in the post-translational modification of proteins. It can catalyze the addition of adenosine monophosphate (AMP) or uridine monophosphate (UMP) to a protein, resulting in modifications known as AMPylation and UMPylation. This chain is Protein nucleotidyltransferase YdiU, found in Marinomonas sp. (strain MWYL1).